The chain runs to 111 residues: Ribonuclease P protein component (111 aa).

Belongs to the RnpA family. In terms of assembly, consists of a catalytic RNA component (M1 or rnpB) and a protein subunit.

The catalysed reaction is Endonucleolytic cleavage of RNA, removing 5'-extranucleotides from tRNA precursor.. RNaseP catalyzes the removal of the 5'-leader sequence from pre-tRNA to produce the mature 5'-terminus. It can also cleave other RNA substrates such as 4.5S RNA. The protein component plays an auxiliary but essential role in vivo by binding to the 5'-leader sequence and broadening the substrate specificity of the ribozyme. The sequence is that of Ribonuclease P protein component from Fusobacterium nucleatum subsp. nucleatum (strain ATCC 25586 / DSM 15643 / BCRC 10681 / CIP 101130 / JCM 8532 / KCTC 2640 / LMG 13131 / VPI 4355).